The following is a 110-amino-acid chain: Large ribosomal subunit protein uL24 (110 aa).

Belongs to the universal ribosomal protein uL24 family. Part of the 50S ribosomal subunit.

Functionally, one of two assembly initiator proteins, it binds directly to the 5'-end of the 23S rRNA, where it nucleates assembly of the 50S subunit. Its function is as follows. One of the proteins that surrounds the polypeptide exit tunnel on the outside of the subunit. This chain is Large ribosomal subunit protein uL24, found in Roseiflexus sp. (strain RS-1).